Here is a 158-residue protein sequence, read N- to C-terminus: Transcriptional repressor NrdR (158 aa).

A zinc finger spans residues 3–34; the sequence is CPYCGYPDSKVIDSRPTDDNTSIRRRRECLKC. The region spanning 49–139 is the ATP-cone domain; sequence ILVIKKDNRR…VYRQFKDINT (91 aa).

The protein belongs to the NrdR family. Requires Zn(2+) as cofactor.

In terms of biological role, negatively regulates transcription of bacterial ribonucleotide reductase nrd genes and operons by binding to NrdR-boxes. In Thermoanaerobacter sp. (strain X514), this protein is Transcriptional repressor NrdR.